A 509-amino-acid polypeptide reads, in one-letter code: Maturase K (509 aa).

Belongs to the intron maturase 2 family. MatK subfamily.

It is found in the plastid. Its subcellular location is the chloroplast. In terms of biological role, usually encoded in the trnK tRNA gene intron. Probably assists in splicing its own and other chloroplast group II introns. The protein is Maturase K of Chamaecyparis obtusa (Hinoki false-cypress).